The sequence spans 401 residues: L-rhamnonate dehydratase (401 aa).

Residues His29 and Arg55 each coordinate substrate. Residues Asp222, Glu248, and Glu276 each coordinate Mg(2+). Residue His325 is the Proton acceptor of the active site. Glu345 lines the substrate pocket.

It belongs to the mandelate racemase/muconate lactonizing enzyme family. RhamD subfamily. In terms of assembly, homooctamer; tetramer of dimers. It depends on Mg(2+) as a cofactor.

It carries out the reaction L-rhamnonate = 2-dehydro-3-deoxy-L-rhamnonate + H2O. In terms of biological role, catalyzes the dehydration of L-rhamnonate to 2-keto-3-deoxy-L-rhamnonate (KDR). In Tolumonas auensis (strain DSM 9187 / NBRC 110442 / TA 4), this protein is L-rhamnonate dehydratase.